The primary structure comprises 261 residues: Matrix metalloproteinase-26 (261 aa).

Positions 1-17 (MQLVILRVTIFLPWCFA) are cleaved as a signal peptide. A propeptide spanning residues 18–89 (VPVPPAADHK…PHCGVPDGSD (72 aa)) is cleaved from the precursor. Asn64 is a glycosylation site (N-linked (GlcNAc...) asparagine). Residues 80-87 (PHCGVPDG) carry the Cysteine switch motif. Residues Cys82 and His208 each contribute to the Zn(2+) site. The active site involves Glu209. His212 and His218 together coordinate Zn(2+). An N-linked (GlcNAc...) asparagine glycan is attached at Asn221.

Belongs to the peptidase M10A family. Zn(2+) is required as a cofactor. Ca(2+) serves as cofactor. As to expression, expressed specifically in uterus and placenta. Is also widely expressed in malignant tumors from different sources as well as in diverse tumor cell lines.

It is found in the secreted. It localises to the extracellular space. Its subcellular location is the extracellular matrix. May hydrolyze collagen type IV, fibronectin, fibrinogen, beta-casein, type I gelatin and alpha-1 proteinase inhibitor. Is also able to activate progelatinase B. The protein is Matrix metalloproteinase-26 (MMP26) of Homo sapiens (Human).